Reading from the N-terminus, the 585-residue chain is MGAPRISHSLALLLCCSVLSSVYALVDADDVITKEEQIILLRNAQAQCEQRLKEVLRVPELAESAKDWMSRSAKTKKEKPAEKLYSQAEESREVSDRSRLQDGFCLPEWDNIVCWPAGVPGKVVAVPCPDYIYDFNHKGRAYRRCDSNGSWELVPGNNRTWANYSECVKFLTNETREREVFDRLGMIYTVGYSISLGSLTVAVLILGYFRRLHCTRNYIHMHLFVSFMLRAVSIFIKDAVLYSGVSTDEIERITEEELRAFTEPPPADKAGFVGCRVAVTVFLYFLTTNYYWILVEGLYLHSLIFMAFFSEKKYLWGFTLFGWGLPAVFVAVWVTVRATLANTECWDLSSGNKKWIIQVPILAAIVVNFILFINIIRVLATKLRETNAGRCDTRQQYRKLLKSTLVLMPLFGVHYIVFMATPYTEVSGILWQVQMHYEMLFNSFQGFFVAIIYCFCNGEVQAEIKKSWSRWTLALDFKRKARSGSSTYSYGPMVSHTSVTNVGPRGGLALSLSPRLAPGAGASANGHHQLPGYVKHGSISENSLPSSGPEPGTKDDGYLNGSGLYEPMVGEQPPPLLEEERETVM.

The first 26 residues, 1-26, serve as a signal peptide directing secretion; sequence MGAPRISHSLALLLCCSVLSSVYALV. Topologically, residues 27–185 are extracellular; the sequence is DADDVITKEE…REREVFDRLG (159 aa). Cystine bridges form between C48/C114, C105/C145, and C128/C167. Residues 69–90 are disordered; it reads MSRSAKTKKEKPAEKLYSQAEE. 4 N-linked (GlcNAc...) asparagine glycosylation sites follow: N148, N158, N163, and N173. The chain crosses the membrane as a helical span at residues 186–209; the sequence is MIYTVGYSISLGSLTVAVLILGYF. The Cytoplasmic portion of the chain corresponds to 210 to 216; the sequence is RRLHCTR. Residues 217–236 form a helical membrane-spanning segment; it reads NYIHMHLFVSFMLRAVSIFI. The Extracellular portion of the chain corresponds to 237 to 276; sequence KDAVLYSGVSTDEIERITEEELRAFTEPPPADKAGFVGCR. The helical transmembrane segment at 277-300 threads the bilayer; the sequence is VAVTVFLYFLTTNYYWILVEGLYL. The Cytoplasmic segment spans residues 301-314; it reads HSLIFMAFFSEKKY. Residues 315 to 336 traverse the membrane as a helical segment; it reads LWGFTLFGWGLPAVFVAVWVTV. Over 337-355 the chain is Extracellular; sequence RATLANTECWDLSSGNKKW. The chain crosses the membrane as a helical span at residues 356–376; that stretch reads IIQVPILAAIVVNFILFINII. Residues 377-403 lie on the Cytoplasmic side of the membrane; that stretch reads RVLATKLRETNAGRCDTRQQYRKLLKS. Residues 404 to 422 traverse the membrane as a helical segment; sequence TLVLMPLFGVHYIVFMATP. At 423–434 the chain is on the extracellular side; that stretch reads YTEVSGILWQVQ. Residues 435-457 traverse the membrane as a helical segment; that stretch reads MHYEMLFNSFQGFFVAIIYCFCN. Over 458–585 the chain is Cytoplasmic; that stretch reads GEVQAEIKKS…LLEEERETVM (128 aa). Residues 468 to 471 carry the Important for interaction with G proteins motif; sequence WSRW. Residues 531–585 form a disordered region; that stretch reads PGYVKHGSISENSLPSSGPEPGTKDDGYLNGSGLYEPMVGEQPPPLLEEERETVM.

This sequence belongs to the G-protein coupled receptor 2 family. In terms of assembly, homodimer in the absence of bound ligand. Peptide hormone binding leads to dissociation of the homodimer. N-glycosylated.

Its subcellular location is the cell membrane. Its function is as follows. G-protein-coupled receptor for parathyroid hormone (PTH) and for parathyroid hormone-related peptide (PTHLH). Ligand binding causes a conformation change that triggers signaling via guanine nucleotide-binding proteins (G proteins) and modulates the activity of downstream effectors, such as adenylate cyclase (cAMP). PTH1R is coupled to G(s) G alpha proteins and mediates activation of adenylate cyclase activity. PTHLH dissociates from PTH1R more rapidly than PTH; as consequence, the cAMP response induced by PTHLH decays faster than the response induced by PTH. The sequence is that of Parathyroid hormone/parathyroid hormone-related peptide receptor (PTH1R) from Didelphis virginiana (North American opossum).